The primary structure comprises 690 residues: Glutaminase A (690 aa).

The signal sequence occupies residues 1-20; that stretch reads MMHFLSFCLSVASLVSYAGA. 7 N-linked (GlcNAc...) asparagine glycosylation sites follow: N80, N96, N435, N508, N528, N538, and N571.

It belongs to the fungal glutaminase gtaA family.

Its subcellular location is the secreted. It carries out the reaction L-glutamine + H2O = L-glutamate + NH4(+). Activity is inhibited by about 80% in the presence of 18% sodium chloride. Glutaminase catalyzes the hydrolysis of glutamine to glutamic acid and plays a key role in nitrogen metabolism. Catalyzes the hydrolysis not only of L-glutamine but also of D-glutamine. This chain is Glutaminase A, found in Aspergillus oryzae (strain ATCC 42149 / RIB 40) (Yellow koji mold).